Reading from the N-terminus, the 146-residue chain is Hemoglobin subunit beta (146 aa).

Position 1 is an N-acetylvaline (Val1). The Globin domain occupies His2–His146. At Ser44 the chain carries Phosphoserine. Residue Lys59 is modified to N6-acetyllysine. His63 is a heme b binding site. N6-acetyllysine is present on Lys82. His92 lines the heme b pocket. Cys93 bears the S-nitrosocysteine mark. The residue at position 144 (Lys144) is an N6-acetyllysine.

It belongs to the globin family. Heterotetramer of two alpha chains and two beta chains. In terms of tissue distribution, red blood cells.

Involved in oxygen transport from the lung to the various peripheral tissues. In Sciurus carolinensis (Eastern gray squirrel), this protein is Hemoglobin subunit beta.